We begin with the raw amino-acid sequence, 368 residues long: Germination protease (368 aa).

Positions 1–15 (MKEPLDLSKYSVRTD) are excised as a propeptide.

Belongs to the peptidase A25 family. As to quaternary structure, homotetramer. In terms of processing, autoproteolytically processed. The inactive tetrameric zymogen termed p46 autoprocesses to a smaller form termed p41, which is active only during spore germination.

The enzyme catalyses Endopeptidase action with P4 Glu or Asp, P1 preferably Glu &gt; Asp, P1' hydrophobic and P2' Ala.. Initiates the rapid degradation of small, acid-soluble proteins during spore germination. The polypeptide is Germination protease (Bacillus anthracis (strain A0248)).